Consider the following 474-residue polypeptide: tRNA-2-methylthio-N(6)-dimethylallyladenosine synthase (474 aa).

Residues 3–120 (QKLHIKTWGC…LPEMINQIRG (118 aa)) enclose the MTTase N-terminal domain. Positions 12, 49, 83, 157, 161, and 164 each coordinate [4Fe-4S] cluster. The Radical SAM core domain occupies 143 to 375 (RAEGPTAFVS…QQRINNQAAQ (233 aa)). The region spanning 378–441 (RAMLGTEQRV…TNSLRGEVVR (64 aa)) is the TRAM domain.

It belongs to the methylthiotransferase family. MiaB subfamily. Monomer. [4Fe-4S] cluster is required as a cofactor.

The protein localises to the cytoplasm. The enzyme catalyses N(6)-dimethylallyladenosine(37) in tRNA + (sulfur carrier)-SH + AH2 + 2 S-adenosyl-L-methionine = 2-methylsulfanyl-N(6)-dimethylallyladenosine(37) in tRNA + (sulfur carrier)-H + 5'-deoxyadenosine + L-methionine + A + S-adenosyl-L-homocysteine + 2 H(+). In terms of biological role, catalyzes the methylthiolation of N6-(dimethylallyl)adenosine (i(6)A), leading to the formation of 2-methylthio-N6-(dimethylallyl)adenosine (ms(2)i(6)A) at position 37 in tRNAs that read codons beginning with uridine. The protein is tRNA-2-methylthio-N(6)-dimethylallyladenosine synthase of Pasteurella multocida (strain Pm70).